The primary structure comprises 515 residues: Forkhead box protein H1 (515 aa).

The disordered stretch occupies residues 55-103 (YREGGTWSPDRGSMHGLSPGTQEGSCTQAEGTKDSLGGDETLSRKSKKK). A compositionally biased stretch (polar residues) spans 73-84 (PGTQEGSCTQAE). A DNA-binding region (fork-head) is located at residues 110-206 (KPPYSYLAMI…MKLQNTALTR (97 aa)). Residues 307 to 399 (YPQSKPTRNG…EPPKKMPLLS (93 aa)) form a disordered region. Positions 322 to 339 (SASHSTYSSSSSSISTIS) are enriched in low complexity. The segment covering 375-388 (STPSSDTDAGNYSP) has biased composition (polar residues). Residues 377–503 (PSSDTDAGNY…PSFLGQCLGS (127 aa)) are SMAD-interaction domain (SID). A Fast/FoxH1 motif 1 (FM1) motif is present at residues 402–406 (LPTSY). The Fast/FoxH1 motif 2 (FM2) motif lies at 412–418 (PNVVAPP). Residues 467-488 (LDNMLKTVPPNKSVFDVLTSHP) carry the SMAD-interaction motif (SIM) motif.

ARF1 contains 2 smad2s, 1 smad4 and 1 foxh1/fast-1 protein. Interaction with smad4 is most likely indirect through interaction with the MH2 domain of smad2. Binds to the MH2 domain of smad3, which can incorporate into the ARF1 complex. The ARF1 and ARF2 complexes are activated by distinct TGF-beta family members; formation of ARF1 is promoted by activin. Interacts (via Fork-head domain) with gtf2ird1/wbscr11 (via repeats 4-5).

It is found in the nucleus. In terms of biological role, transcriptional activator. Recognizes and binds to the DNA sequence 5'-TGT[GT][GT]ATT-3'. Upon TGF-beta induction, forms a transcriptionally active complex with smad2 and smad4 called activin-responsive factor 1 (ARF1), which binds a site on the mix-B/mix.2 promoter called the activin response element (ARE). Binds to activated smads and the ARE with much lower affinity than fast3. Necessary for the first steps in mesoderm specification, directly inducing mesodermal genes. Acts with fast3 to control the convergent extension movements of gastrulation. Binds to the proximal element (PE) of the gsc gene and cooperates with gtf2ird1/wbscr11 and SMAD proteins to regulate gsc transcription. This chain is Forkhead box protein H1, found in Xenopus tropicalis (Western clawed frog).